Consider the following 141-residue polypeptide: Hemoglobin subunit beta-C (141 aa).

The Globin domain occupies 1–141 (PNKALITGFW…VASALAHRYH (141 aa)). Heme b is bound by residues H58 and H87.

Belongs to the globin family. In terms of assembly, heterotetramer of two alpha chains and two beta chains. As to expression, red blood cells.

Involved in oxygen transport from the lung to the various peripheral tissues. In Ovis aries musimon (Mouflon), this protein is Hemoglobin subunit beta-C (HBBC).